The primary structure comprises 296 residues: Ribosomal protein L11 methyltransferase (296 aa).

Residues Thr146, Gly167, Asp189, and Asn231 each coordinate S-adenosyl-L-methionine.

Belongs to the methyltransferase superfamily. PrmA family.

It is found in the cytoplasm. It carries out the reaction L-lysyl-[protein] + 3 S-adenosyl-L-methionine = N(6),N(6),N(6)-trimethyl-L-lysyl-[protein] + 3 S-adenosyl-L-homocysteine + 3 H(+). Methylates ribosomal protein L11. This is Ribosomal protein L11 methyltransferase from Haemophilus influenzae (strain ATCC 51907 / DSM 11121 / KW20 / Rd).